The chain runs to 143 residues: ATP synthase subunit b' (143 aa).

A helical membrane pass occupies residues 6-26 (ATLPLMALQFVVLAFLLNAIF).

It belongs to the ATPase B chain family. F-type ATPases have 2 components, F(1) - the catalytic core - and F(0) - the membrane proton channel. F(1) has five subunits: alpha(3), beta(3), gamma(1), delta(1), epsilon(1). F(0) has four main subunits: a(1), b(1), b'(1) and c(10-14). The alpha and beta chains form an alternating ring which encloses part of the gamma chain. F(1) is attached to F(0) by a central stalk formed by the gamma and epsilon chains, while a peripheral stalk is formed by the delta, b and b' chains.

The protein localises to the cellular thylakoid membrane. Its function is as follows. F(1)F(0) ATP synthase produces ATP from ADP in the presence of a proton or sodium gradient. F-type ATPases consist of two structural domains, F(1) containing the extramembraneous catalytic core and F(0) containing the membrane proton channel, linked together by a central stalk and a peripheral stalk. During catalysis, ATP synthesis in the catalytic domain of F(1) is coupled via a rotary mechanism of the central stalk subunits to proton translocation. Functionally, component of the F(0) channel, it forms part of the peripheral stalk, linking F(1) to F(0). The b'-subunit is a diverged and duplicated form of b found in plants and photosynthetic bacteria. The protein is ATP synthase subunit b' of Synechocystis sp. (strain ATCC 27184 / PCC 6803 / Kazusa).